Consider the following 698-residue polypeptide: Interleukin enhancer-binding factor 3 (698 aa).

Positions 5-379 constitute a DZF domain; sequence RIFLNDDRHV…ALKRPMEEDG (375 aa). Disordered stretches follow at residues 51-88, 374-403, and 473-522; these read QQEK…PTRT, PMEE…PPQA, and EEKE…KHGK. A compositionally biased stretch (acidic residues) spans 61–71; it reads EQPEPEEPETT. Basic and acidic residues-rich tracts occupy residues 72 to 81 and 374 to 384; these read EEGKDSEGKT and PMEEDGEDKSP. The short motif at 372-390 is the Bipartite nuclear localization signal element; sequence KRPMEEDGEDKSPSKKKKK. The 70-residue stretch at 399-468 folds into the DRBM 1 domain; sequence EPPQAMNALM…AVKVLQDMGL (70 aa). The segment covering 490–503 has biased composition (polar residues); it reads TPAQPADSTQTDSA. Positions 520–586 constitute a DRBM 2 domain; the sequence is HGKNPVMELN…ALAALEKLFP (67 aa).

In terms of assembly, a component of a ybx2/frgy2-containing mRNA-ribonucleoprotein (mRNP) complex. Also a component of the CCAAT box transcription factor (CBTF) complex. In terms of processing, phosphorylated. Phosphorylation affects nuclear translocation. Methylated by protein arginine N-methyltransferase 1 (prmt1b) in the RGG-rich domain. Methylation decreases DNA-binding and thereby decreases transcription of the gata2 gene, but does not regulate dsRNA binding or subcellular localization.

It is found in the nucleus. It localises to the cytoplasm. Its function is as follows. RNA-binding protein that plays an essential role in the biogenesis of circular RNAs (circRNAs) which are produced by back-splicing circularization of pre-mRNAs. Within the nucleus, promotes circRNAs processing by stabilizing the regulatory elements residing in the flanking introns of the circularized exons. Plays thereby a role in the back-splicing of a subset of circRNAs. As a consequence, participates in a wide range of transcriptional and post-transcriptional processes. Binds to poly-U elements and AU-rich elements (AREs) in the 3'-UTR of target mRNAs. Upon viral infection, ILF3 accumulates in the cytoplasm and participates in the innate antiviral response. Mechanistically, ILF3 becomes phosphorylated and activated by the double-stranded RNA-activated protein kinase/PKR which releases ILF3 from cellular mature circRNAs. In turn, unbound ILF3 molecules are able to interact with and thus inhibit viral mRNAs. Has a cytoplasmic role early in development as part of a ribonucleoprotein (mRNP) complex which may regulate mRNA transport and/or translation. Following nuclear localization at the mid-blastula transition, acts as a transcription factor and binds the 5'-CCAAT-3' promoter sequence to regulate transcription of the gata2 gene as a subunit of the CCAAT box transcription factor (CBTF). Its role as an mRNP component negatively regulates its activity as a transcription factor by precluding its nuclear localization. The protein is Interleukin enhancer-binding factor 3 of Xenopus tropicalis (Western clawed frog).